Reading from the N-terminus, the 585-residue chain is uncharacterized protein (585 aa).

Polar residues predominate over residues 1-18 (MSALSTKLEPTNSYSESL). A disordered region spans residues 1–23 (MSALSTKLEPTNSYSESLPPQRR).

It belongs to the protein kinase superfamily. ADCK protein kinase family.

This is an uncharacterized protein from Synechocystis sp. (strain ATCC 27184 / PCC 6803 / Kazusa).